A 371-amino-acid polypeptide reads, in one-letter code: MSNQHTLLISNLLPVGSNISTWWNFGSMLLICLTLQIMTGFFLAIHYTANINLAFSSVVHITRDVPYGWIMQNLHTIGASMFFICIYTHIARGLYYGLYLNKSVWLSGTTLLITLMATAFFGYVLPWGQMSFWAATVITNLLTAIPYLGTTITTWLWGGFSINDPTLTRFFALHFIIPFAIISLSSIHIILLHNKGSNNPLGTNSDIDKIPFHPYHSYKDTLTSTFMLITLFIILSFTPDLFNDPENFSKANPLITPQHIKPEWYFLFAYGILRSIPNKLGGTLALLMSVIILTTMPFTHTSYVRSMTFRPLAQTMFWMLIATFITITWTASKPVEPPFIIISQTTSIFYFSFFIMNPLLGWTENKIMMNY.

A run of 4 helical transmembrane segments spans residues 25-45 (FGSM…FLAI), 69-90 (WIMQ…YTHI), 105-125 (WLSG…GYVL), and 170-190 (FFAL…IHII). The heme b site is built by His75 and His89. Residues His174 and His188 each contribute to the heme b site. His193 contributes to the a ubiquinone binding site. A run of 4 helical transmembrane segments spans residues 218 to 238 (YKDT…LSFT), 280 to 300 (LGGT…PFTH), 312 to 332 (LAQT…WTAS), and 339 to 358 (FIII…IMNP).

Belongs to the cytochrome b family. The cytochrome bc1 complex contains 3 respiratory subunits (MT-CYB, CYC1 and UQCRFS1), 2 core proteins (UQCRC1 and UQCRC2) and probably 6 low-molecular weight proteins. The cofactor is heme b.

It localises to the mitochondrion inner membrane. Its function is as follows. Component of the ubiquinol-cytochrome c reductase complex (complex III or cytochrome b-c1 complex) that is part of the mitochondrial respiratory chain. The b-c1 complex mediates electron transfer from ubiquinol to cytochrome c. Contributes to the generation of a proton gradient across the mitochondrial membrane that is then used for ATP synthesis. In Sinomicrurus macclellandi (Macclelland's coral snake), this protein is Cytochrome b (MT-CYB).